Here is a 23-residue protein sequence, read N- to C-terminus: Acetylcholine receptor subunit gamma (23 aa).

It belongs to the ligand-gated ion channel (TC 1.A.9) family. Acetylcholine receptor (TC 1.A.9.1) subfamily. Gamma/CHRNG sub-subfamily. As to quaternary structure, pentamer of two alpha chains, and one each of the beta, delta, and gamma chains.

It is found in the postsynaptic cell membrane. The protein resides in the cell membrane. It carries out the reaction K(+)(in) = K(+)(out). It catalyses the reaction Na(+)(in) = Na(+)(out). In terms of biological role, after binding acetylcholine, the AChR responds by an extensive change in conformation that affects all subunits and leads to opening of an ion-conducting channel across the plasma membrane. This is Acetylcholine receptor subunit gamma (chrng) from Electrophorus electricus (Electric eel).